The primary structure comprises 148 residues: Endoribonuclease YbeY (148 aa).

Zn(2+) is bound by residues H113, H117, and H123.

The protein belongs to the endoribonuclease YbeY family. Requires Zn(2+) as cofactor.

It is found in the cytoplasm. Its function is as follows. Single strand-specific metallo-endoribonuclease involved in late-stage 70S ribosome quality control and in maturation of the 3' terminus of the 16S rRNA. The protein is Endoribonuclease YbeY of Borrelia hermsii (strain HS1 / DAH).